A 153-amino-acid chain; its full sequence is Transcriptional repressor NrdR (153 aa).

A zinc finger spans residues 3–34 (CPYCGHPDTRVVDSRPSDEGMAIRRRRECPSC). An ATP-cone domain is found at 49 to 136 (LMVVKRDGRK…VYREFDSVER (88 aa)).

Belongs to the NrdR family. It depends on Zn(2+) as a cofactor.

In terms of biological role, negatively regulates transcription of bacterial ribonucleotide reductase nrd genes and operons by binding to NrdR-boxes. The polypeptide is Transcriptional repressor NrdR (Thermus thermophilus (strain ATCC BAA-163 / DSM 7039 / HB27)).